Here is a 309-residue protein sequence, read N- to C-terminus: D-alanine--D-alanine ligase (309 aa).

In terms of domain architecture, ATP-grasp spans 99-304 (KRVLLQAGIP…FPDLVQKIVD (206 aa)). 132 to 187 (LKELGLPVVIKAPTQGSTIGTFIVREEGELEPAIAGALKYDLSFMAEAYLAGPEIT) provides a ligand contact to ATP. The Mg(2+) site is built by Asp-258, Glu-271, and Asn-273.

Belongs to the D-alanine--D-alanine ligase family. Mg(2+) is required as a cofactor. It depends on Mn(2+) as a cofactor.

The protein resides in the cytoplasm. The catalysed reaction is 2 D-alanine + ATP = D-alanyl-D-alanine + ADP + phosphate + H(+). The protein operates within cell wall biogenesis; peptidoglycan biosynthesis. Its function is as follows. Cell wall formation. This chain is D-alanine--D-alanine ligase, found in Moorella thermoacetica (strain ATCC 39073 / JCM 9320).